Here is a 144-residue protein sequence, read N- to C-terminus: MEREGSGGSGGSAGLLQQILSLKVVPRVGNGTLCPNSTSLCSFPEMWYGVFLWALVSSLFFHVPAGLLALFTLRHHKYGRFMSVSILLMGIVGPITAGILTSAAIAGVYRAAGKEMIPFEALTLGTGQTFCVLVVSFLRILATL.

The Lumenal portion of the chain corresponds to M1 to V50. Residues N30 and N36 are each glycosylated (N-linked (GlcNAc...) asparagine). Residues F51–F71 form a helical membrane-spanning segment. Residues T72–S85 lie on the Cytoplasmic side of the membrane. The chain crosses the membrane as a helical span at residues I86–A106. The Lumenal segment spans residues G107–M116. Residues I117–F137 traverse the membrane as a helical segment. Topologically, residues L138 to L144 are cytoplasmic.

Belongs to the TMEM170 family. As to quaternary structure, interacts with RTN4.

The protein localises to the endoplasmic reticulum membrane. Its subcellular location is the nucleus envelope. In terms of biological role, acts as a regulator of endoplasmic reticulum (ER) and nuclear envelope (NE) morphogenesis. Affects the ratio between tubular ER and ER sheets by promoting sheet formation at the expense of tubules. Influences NE expansion, nuclear pore complex formation and proper localization of inner nuclear membrane proteins. The polypeptide is Transmembrane protein 170A (TMEM170A) (Homo sapiens (Human)).